The sequence spans 236 residues: Small ribosomal subunit protein uS3 (236 aa).

Positions 39–107 (VRQFLTKELK…PAQINISEVR (69 aa)) constitute a KH type-2 domain.

It belongs to the universal ribosomal protein uS3 family. In terms of assembly, part of the 30S ribosomal subunit. Forms a tight complex with proteins S10 and S14.

Functionally, binds the lower part of the 30S subunit head. Binds mRNA in the 70S ribosome, positioning it for translation. This Aeromonas salmonicida (strain A449) protein is Small ribosomal subunit protein uS3.